The following is a 148-amino-acid chain: Small ribosomal subunit protein eS6 (148 aa).

This sequence belongs to the eukaryotic ribosomal protein eS6 family.

The polypeptide is Small ribosomal subunit protein eS6 (Pyrobaculum aerophilum (strain ATCC 51768 / DSM 7523 / JCM 9630 / CIP 104966 / NBRC 100827 / IM2)).